The following is a 167-amino-acid chain: GTP-dependent dephospho-CoA kinase (167 aa).

The GTP site is built by Asp-39, Val-41, Asp-58, Lys-60, and Glu-117.

Belongs to the GTP-dependent DPCK family.

The catalysed reaction is 3'-dephospho-CoA + GTP = GDP + CoA + H(+). Its pathway is cofactor biosynthesis; coenzyme A biosynthesis. In terms of biological role, catalyzes the GTP-dependent phosphorylation of the 3'-hydroxyl group of dephosphocoenzyme A to form coenzyme A (CoA). In Korarchaeum cryptofilum (strain OPF8), this protein is GTP-dependent dephospho-CoA kinase.